We begin with the raw amino-acid sequence, 395 residues long: Aurora kinase A (395 aa).

The interval 1–114 (MDRCKENCVS…QASLQKTEDT (114 aa)) is disordered. Composition is skewed to polar residues over residues 29–60 (QIPS…SQAQ) and 84–99 (RLNN…ASGN). Residues Ser40 and Ser50 each carry the phosphoserine modification. Over residues 100–114 (DSEKEQASLQKTEDT) the composition is skewed to basic and acidic residues. One can recognise a Protein kinase domain in the interval 124-374 (FDIGRPLGKG…LAEVLEHPWI (251 aa)). Residues Lys134, Lys153, and 201-204 (LEYA) each bind ATP. Residue Asp247 is the Proton acceptor of the active site. Residue Lys249 forms a Glycyl lysine isopeptide (Lys-Gly) (interchain with G-Cter in SUMO2) linkage. ATP is bound by residues 251–252 (EN) and Asp265. Residues 271 to 284 (HAPSSRRTTMCGTL) are activation segment. A phosphothreonine mark is found at Thr278 and Thr279. Residue Ser333 is modified to Phosphoserine; by PKA and PAK. Residues 376–385 (ANSSKPPTGH) show a composition bias toward polar residues. The tract at residues 376 to 395 (ANSSKPPTGHTSKEPTSKSS) is disordered. Over residues 386–395 (TSKEPTSKSS) the composition is skewed to basic and acidic residues.

Belongs to the protein kinase superfamily. Ser/Thr protein kinase family. Aurora subfamily. In terms of assembly, part of a complex composed of NEDD9, AURKA and CTTN; within the complex NEDD9 acts as a scaffold protein and is required for complex formation. Identified in a complex with AUNIP and NIN. Interacts with CPEB1, JTB, TACC1, TPX2, PPP2CA, as well as with the protein phosphatase type 1 (PP1) isoforms PPP1CA, PPP1CB and PPP1CC. Also interacts with its substrates ARHGEF2, BORA, KIF2A, PARD3, and p53/TP53. Interaction with BORA promotes phosphorylation of PLK1. Interacts with GADD45A, competing with its oligomerization. Interacts with FBXL7 and CIMAP3. Interacts (via C-terminus) with AUNIP (via C-terminus). Interacts with SIRT2. Interacts with FRY; this interaction facilitates AURKA-mediated PLK1 phosphorylation. Interacts with MYCN; interaction is phospho-independent and triggers AURKA activation; AURKA competes with FBXW7 for binding to unphosphorylated MYCN but not for binding to phosphorylated MYCN. Interacts with HNRNPU. Interacts with AAAS. Interacts with KLHL18 and CUL3. Interacts with FOXP1. Interacts with HDAC6; AURKA-mediated phosphorylation of HDAC6 promotes deacetylation of alpha-tubulin. In terms of processing, activated by phosphorylation at Thr-279; this brings about a change in the conformation of the activation segment. Phosphorylation at Thr-279 varies during the cell cycle and is highest during M phase. Autophosphorylated at Thr-279 upon TPX2 binding. Thr-279 can be phosphorylated by several kinases, including PAK and PKA. Protein phosphatase type 1 (PP1) binds AURKA and inhibits its activity by dephosphorylating Thr-279 during mitosis. Phosphorylation at Ser-333 decreases the kinase activity. PPP2CA controls degradation by dephosphorylating Ser-52 at the end of mitosis. Post-translationally, ubiquitinated by the anaphase-promoting complex (APC), leading to its degradation by the proteasome. Ubiquitinated by CHFR, leading to its degradation by the proteasome. Ubiquitinated by the E3 ubiquitin-protein ligase complex SCF(FBXL7) during mitosis, leading to its degradation by the proteasome. As to expression, detected in embryonic neurons in dorsal root ganglia and brain cortex (at protein level). Highly expressed in testis, in about one third of the seminiferous tubules. Expression is restricted to specific spermatocytes nearing completion of prophase, with levels falling off on transition to elongated spermatids. Highly expressed in the ovary, expression in the oocyte starts around the transition to large growing follicle. Abundant expression is seen in the proliferating granulosa and thecal cells of the growing follicle, and in the young corpus luteum. Very weakly expressed in spleen and intestine.

It is found in the cytoplasm. Its subcellular location is the cytoskeleton. The protein resides in the microtubule organizing center. It localises to the centrosome. The protein localises to the spindle pole. It is found in the centriole. Its subcellular location is the cell projection. The protein resides in the neuron projection. It localises to the cilium. The protein localises to the cilium basal body. It is found in the basolateral cell membrane. The catalysed reaction is L-seryl-[protein] + ATP = O-phospho-L-seryl-[protein] + ADP + H(+). It catalyses the reaction L-threonyl-[protein] + ATP = O-phospho-L-threonyl-[protein] + ADP + H(+). Its activity is regulated as follows. Activation of CDK1, appears to be an upstream event of AURKA activation. Phosphatase inhibitor-2 (PPP1R2) and TPX2 act also as activators. Inactivated by the G2 checkpoint. Inhibited by GADD45A and p53/TP53, and through dephosphorylation by protein phosphatase type 1 (PP1). MLN8054 is also a potent and selective inhibitor. Activated during the early phase of cilia disassembly in the presence of CIMAP3. Inhibited by the small molecule inhibitor VX-680. Its function is as follows. Mitotic serine/threonine kinase that contributes to the regulation of cell cycle progression. Associates with the centrosome and the spindle microtubules during mitosis and plays a critical role in various mitotic events including the establishment of mitotic spindle, centrosome duplication, centrosome separation as well as maturation, chromosomal alignment, spindle assembly checkpoint, and cytokinesis. Required for normal spindle positioning during mitosis and for the localization of NUMA1 and DCTN1 to the cell cortex during metaphase. Required for initial activation of CDK1 at centrosomes. Phosphorylates numerous target proteins, including ARHGEF2, BORA, BRCA1, CDC25B, DLGP5, HDAC6, KIF2A, LATS2, NDEL1, PARD3, PPP1R2, PLK1, RASSF1, TACC3, p53/TP53 and TPX2. Phosphorylates MCRS1 which is required for MCRS1-mediated kinetochore fiber assembly and mitotic progression. Regulates KIF2A tubulin depolymerase activity. Required for normal axon formation. Plays a role in microtubule remodeling during neurite extension. Important for microtubule formation and/or stabilization. Also acts as a key regulatory component of the p53/TP53 pathway, and particularly the checkpoint-response pathways critical for oncogenic transformation of cells, by phosphorylating and destabilizing p53/TP53. Phosphorylates its own inhibitors, the protein phosphatase type 1 (PP1) isoforms, to inhibit their activity. Inhibits cilia outgrowth. Required for cilia disassembly via phosphorylation of HDAC6 and subsequent deacetylation of alpha-tubulin. Regulates protein levels of the anti-apoptosis protein BIRC5 by suppressing the expression of the SCF(FBXL7) E3 ubiquitin-protein ligase substrate adapter FBXL7 through the phosphorylation of the transcription factor FOXP1. This is Aurora kinase A (Aurka) from Mus musculus (Mouse).